The following is a 590-amino-acid chain: Protein NRT1/ PTR FAMILY 6.4 (590 aa).

The tract at residues M1–P24 is disordered. The next 12 helical transmembrane spans lie at I48–S68, A73–L93, V104–I124, G147–I167, F197–D217, G222–G242, V332–Y352, G371–F391, I419–A439, A453–G473, G492–V512, and F533–M553.

The protein belongs to the major facilitator superfamily. Proton-dependent oligopeptide transporter (POT/PTR) (TC 2.A.17) family. As to expression, expressed in leaves, flowers and siliques. Detected in leaves.

The protein resides in the membrane. Low-affinity nitrate transporter. The sequence is that of Protein NRT1/ PTR FAMILY 6.4 (NPF6.4) from Arabidopsis thaliana (Mouse-ear cress).